A 421-amino-acid polypeptide reads, in one-letter code: Imidazolonepropionase (421 aa).

Positions 81 and 83 each coordinate Fe(3+). Residues His-81 and His-83 each coordinate Zn(2+). 4-imidazolone-5-propanoate-binding residues include Arg-90, Tyr-153, and His-186. Tyr-153 serves as a coordination point for N-formimidoyl-L-glutamate. Residue His-251 participates in Fe(3+) binding. His-251 lines the Zn(2+) pocket. Residue Glu-254 participates in 4-imidazolone-5-propanoate binding. Asp-326 contributes to the Fe(3+) binding site. Asp-326 serves as a coordination point for Zn(2+). 2 residues coordinate N-formimidoyl-L-glutamate: Asn-328 and Gly-330. Ser-331 contacts 4-imidazolone-5-propanoate.

The protein belongs to the metallo-dependent hydrolases superfamily. HutI family. The cofactor is Zn(2+). It depends on Fe(3+) as a cofactor.

It is found in the cytoplasm. The enzyme catalyses 4-imidazolone-5-propanoate + H2O = N-formimidoyl-L-glutamate. The protein operates within amino-acid degradation; L-histidine degradation into L-glutamate; N-formimidoyl-L-glutamate from L-histidine: step 3/3. Its function is as follows. Catalyzes the hydrolytic cleavage of the carbon-nitrogen bond in imidazolone-5-propanoate to yield N-formimidoyl-L-glutamate. It is the third step in the universal histidine degradation pathway. This chain is Imidazolonepropionase, found in Streptococcus pyogenes serotype M18 (strain MGAS8232).